The following is a 236-amino-acid chain: Purine nucleoside phosphorylase DeoD-type (236 aa).

His4 lines the a purine D-ribonucleoside pocket. Phosphate-binding positions include Gly20, Arg24, Arg43, and 87 to 90 (RVGT). A purine D-ribonucleoside contacts are provided by residues 179–181 (EME) and 203–204 (SD). Catalysis depends on Asp204, which acts as the Proton donor.

It belongs to the PNP/UDP phosphorylase family. Homohexamer; trimer of homodimers.

The catalysed reaction is a purine D-ribonucleoside + phosphate = a purine nucleobase + alpha-D-ribose 1-phosphate. It carries out the reaction a purine 2'-deoxy-D-ribonucleoside + phosphate = a purine nucleobase + 2-deoxy-alpha-D-ribose 1-phosphate. Catalyzes the reversible phosphorolytic breakdown of the N-glycosidic bond in the beta-(deoxy)ribonucleoside molecules, with the formation of the corresponding free purine bases and pentose-1-phosphate. This Streptococcus pneumoniae (strain JJA) protein is Purine nucleoside phosphorylase DeoD-type.